A 502-amino-acid chain; its full sequence is Glycerol kinase (502 aa).

An ADP-binding site is contributed by T14. 3 residues coordinate ATP: T14, T15, and S16. T14 is a sn-glycerol 3-phosphate binding site. Position 18 (R18) interacts with ADP. Sn-glycerol 3-phosphate-binding residues include R84, E85, Y137, and D247. The glycerol site is built by R84, E85, Y137, D247, and Q248. ADP-binding residues include T269 and G312. Residues T269, G312, Q316, and G413 each contribute to the ATP site. ADP is bound by residues G413 and N417.

Belongs to the FGGY kinase family. In terms of assembly, homotetramer and homodimer (in equilibrium). Heterodimer with EIIA-Glc. Binds 1 zinc ion per glycerol kinase EIIA-Glc dimer. The zinc ion is important for dimerization.

The enzyme catalyses glycerol + ATP = sn-glycerol 3-phosphate + ADP + H(+). The protein operates within polyol metabolism; glycerol degradation via glycerol kinase pathway; sn-glycerol 3-phosphate from glycerol: step 1/1. With respect to regulation, activity of this regulatory enzyme is affected by several metabolites. Allosterically and non-competitively inhibited by fructose 1,6-bisphosphate (FBP) and unphosphorylated phosphocarrier protein EIIA-Glc (III-Glc), an integral component of the bacterial phosphotransferase (PTS) system. In terms of biological role, key enzyme in the regulation of glycerol uptake and metabolism. Catalyzes the phosphorylation of glycerol to yield sn-glycerol 3-phosphate. The sequence is that of Glycerol kinase from Photorhabdus laumondii subsp. laumondii (strain DSM 15139 / CIP 105565 / TT01) (Photorhabdus luminescens subsp. laumondii).